A 200-amino-acid polypeptide reads, in one-letter code: MGMLEQRIQRHFFDSADLKNQAAEVLSKPIADAVQAVLGCITAGGKVLACGNGGSASDAQHFAAEFVGRFERERPGLAAIALNTDTSIITALGNDYDFSAIYAKQVQALGNPGDVLLAITTSGNSANVVAAVDAAHDKDMTVIALTGRGGGKLGARLTETDVHICVPHERTARIQEVHILAIHCLCDAVDVQLLGEQDLT.

Residues 37-199 (VLGCITAGGK…DVQLLGEQDL (163 aa)) enclose the SIS domain. 52 to 54 (NGG) serves as a coordination point for substrate. His61 and Glu65 together coordinate Zn(2+). Residues Glu65, 94 to 95 (ND), 120 to 122 (TTS), Ser125, and Gln175 each bind substrate. 2 residues coordinate Zn(2+): Gln175 and His183.

This sequence belongs to the SIS family. GmhA subfamily. In terms of assembly, homotetramer. The cofactor is Zn(2+).

Its subcellular location is the cytoplasm. It carries out the reaction 2 D-sedoheptulose 7-phosphate = D-glycero-alpha-D-manno-heptose 7-phosphate + D-glycero-beta-D-manno-heptose 7-phosphate. The protein operates within carbohydrate biosynthesis; D-glycero-D-manno-heptose 7-phosphate biosynthesis; D-glycero-alpha-D-manno-heptose 7-phosphate and D-glycero-beta-D-manno-heptose 7-phosphate from sedoheptulose 7-phosphate: step 1/1. Catalyzes the isomerization of sedoheptulose 7-phosphate in D-glycero-D-manno-heptose 7-phosphate. In Methylibium petroleiphilum (strain ATCC BAA-1232 / LMG 22953 / PM1), this protein is Phosphoheptose isomerase.